We begin with the raw amino-acid sequence, 469 residues long: Adenosylhomocysteinase (469 aa).

The substrate site is built by T63, D139, and E164. 165-167 (TTT) is an NAD(+) binding site. Positions 194 and 198 each coordinate substrate. Residues N199, 228–233 (GYGDVG), E251, N300, 321–323 (IGH), and N375 contribute to the NAD(+) site.

Belongs to the adenosylhomocysteinase family. Requires NAD(+) as cofactor.

It is found in the cytoplasm. It catalyses the reaction S-adenosyl-L-homocysteine + H2O = L-homocysteine + adenosine. It functions in the pathway amino-acid biosynthesis; L-homocysteine biosynthesis; L-homocysteine from S-adenosyl-L-homocysteine: step 1/1. May play a key role in the regulation of the intracellular concentration of adenosylhomocysteine. In Pseudomonas fluorescens (strain SBW25), this protein is Adenosylhomocysteinase.